The following is a 272-amino-acid chain: ATP synthase subunit a (272 aa).

The next 6 membrane-spanning stretches (helical) occupy residues 41–61 (VLNI…LSIF), 110–130 (FVWV…FPFI), 143–165 (VPSA…ILFY), 188–208 (VFFI…PISL), 222–242 (IFIL…NVPW), and 243–263 (AIFH…LTIV).

Belongs to the ATPase A chain family. As to quaternary structure, F-type ATPases have 2 components, CF(1) - the catalytic core - and CF(0) - the membrane proton channel. CF(1) has five subunits: alpha(3), beta(3), gamma(1), delta(1), epsilon(1). CF(0) has three main subunits: a(1), b(2) and c(9-12). The alpha and beta chains form an alternating ring which encloses part of the gamma chain. CF(1) is attached to CF(0) by a central stalk formed by the gamma and epsilon chains, while a peripheral stalk is formed by the delta and b chains.

The protein resides in the cell membrane. In terms of biological role, key component of the proton channel; it plays a direct role in the translocation of protons across the membrane. The chain is ATP synthase subunit a from Buchnera aphidicola subsp. Schizaphis graminum (strain Sg).